We begin with the raw amino-acid sequence, 83 residues long: uncharacterized protein (83 aa).

This sequence belongs to the UPF0440 family.

This is an uncharacterized protein from Natronomonas pharaonis (strain ATCC 35678 / DSM 2160 / CIP 103997 / JCM 8858 / NBRC 14720 / NCIMB 2260 / Gabara) (Halobacterium pharaonis).